The following is a 55-amino-acid chain: ATP synthase protein 8 (55 aa).

Residues 7–24 traverse the membrane as a helical segment; sequence NPWFFIMIISWLTYSMII. Residues 34–55 form a disordered region; that stretch reads TNPPARKEPTTNTTTPWNWPWT. A compositionally biased stretch (low complexity) spans 43 to 55; sequence TTNTTTPWNWPWT.

It belongs to the ATPase protein 8 family. In terms of assembly, F-type ATPases have 2 components, CF(1) - the catalytic core - and CF(0) - the membrane proton channel.

It is found in the mitochondrion membrane. In terms of biological role, mitochondrial membrane ATP synthase (F(1)F(0) ATP synthase or Complex V) produces ATP from ADP in the presence of a proton gradient across the membrane which is generated by electron transport complexes of the respiratory chain. F-type ATPases consist of two structural domains, F(1) - containing the extramembraneous catalytic core and F(0) - containing the membrane proton channel, linked together by a central stalk and a peripheral stalk. During catalysis, ATP synthesis in the catalytic domain of F(1) is coupled via a rotary mechanism of the central stalk subunits to proton translocation. Part of the complex F(0) domain. Minor subunit located with subunit a in the membrane. This is ATP synthase protein 8 (MT-ATP8) from Vireo altiloquus (Black-whiskered vireo).